The primary structure comprises 298 residues: MSAEQNHGLEKDVGGPAAPAAAAPNAPAAAPGAPPAGMSAEEHRSRFGYGPLSHVNTKEAILPPFGGEFQPGLYKSVEARKFANPAPLGLSAFALTTFVLSCINMGARDITHPNIVIALAFGYGGLVQLLAGMWEMAVGNTFGATALSSYGGFWIAFAIVLTPGGFNIQTALTAENGDEAMFYNSFGLFLMGWFIFTTIMLFCTLRSTVAFFLLFLFLDLAFLLLGVGYIQRDDAGQPNPPVIKAGGFFGLLAAFAAWYNALAGIADSSNSFFIIPVAHFPWSPTGRARREKTERETV.

The segment at 1 to 43 is disordered; the sequence is MSAEQNHGLEKDVGGPAAPAAAAPNAPAAAPGAPPAGMSAEEH. Positions 14 to 37 are enriched in low complexity; sequence GGPAAPAAAAPNAPAAAPGAPPAG. Transmembrane regions (helical) follow at residues 86–106, 115–135, 146–166, 185–205, 210–230, and 245–265; these read APLGLSAFALTTFVLSCINMG, IVIALAFGYGGLVQLLAGMWE, ALSSYGGFWIAFAIVLTPGGF, SFGLFLMGWFIFTTIMLFCTL, AFFLLFLFLDLAFLLLGVGYI, and AGGFFGLLAAFAAWYNALAGI.

The protein belongs to the acetate uptake transporter (AceTr) (TC 2.A.96) family.

It is found in the cell membrane. Its subcellular location is the vacuole membrane. Functionally, high affinity monocarboxylate transporter (MCT) involved in acetate uptake. Unlike other activities involved in acetate utilization, acpA is dispensable for growth on the acetate precursor ethanol. This Emericella nidulans (strain FGSC A4 / ATCC 38163 / CBS 112.46 / NRRL 194 / M139) (Aspergillus nidulans) protein is Acetate permease A.